The following is a 570-amino-acid chain: Transmembrane 7 superfamily member 3 (570 aa).

Residues 1 to 21 form the signal peptide; the sequence is MGFLQLLVVAVLASEHRVAGA. N-linked (GlcNAc...) asparagine glycosylation is found at Asn-27, Asn-61, Asn-75, Asn-87, and Asn-264. The next 7 helical transmembrane spans lie at 296–313, 320–342, 347–369, 371–393, 408–430, 437–459, and 479–501; these read VFFT…FFGH, LFFI…LTPI, NLIL…WWRF, ILSI…VTFF, FWVT…LRIL, VIGS…SYIT, and PFQT…GITL.

In terms of tissue distribution, widely expressed. Highly expressed in kidney and pancreas.

Its subcellular location is the cell membrane. Its function is as follows. Involved in the inhibition of cytokine-induced death of pancreatic beta cells. Involved in the promotion of insulin secretion from pancreatic beta cells. Is a downstream transcriptional target of p53/TP53, and acts as a pro-survival homeostatic factor that attenuates the development of cellular stress. Maintains protein homeostasis and promotes cell survival through attenuation of endoplasmic reticulum (ER) stress and the subsequent induction of unfolded protein response (UPR). This is Transmembrane 7 superfamily member 3 (TM7SF3) from Homo sapiens (Human).